The sequence spans 133 residues: Salivary cystatin-L2 (133 aa).

An N-terminal signal peptide occupies residues 1 to 18 (MTSSLALVLLLGGAAVCA). The 85-residue stretch at 34-118 (DDPKYLELAH…RTCTAVIYEN (85 aa)) folds into the Cystatin domain.

Belongs to the cystatin family. Salivary gland, midgut and other tissues.

The protein localises to the secreted. Functionally, inhibitor of cysteine proteinases. Inhibits host cathepsin L (CTSL) and S (CTSS). Modulates production of various cytokines and chemokines in lipopolysaccharide (LPS)-stimulated mouse dendritic cell. Suppresses maturation of mouse bone-marrow-derived dendritic cells (BMDCs). (Microbial infection) Modulates Borrelia miyamotoi-stimulated immune responses in mice by suppressing activities of host dendritic and T-cells. This Ixodes persulcatus (Taiga tick) protein is Salivary cystatin-L2.